We begin with the raw amino-acid sequence, 445 residues long: MDLRTPKGTHDYGPRECYLLNRFLRAVTEVFETHGAACIDTPTFELRELLCNKYGDESRLIFDLADQGGDICSLRYDLTVSFARFLAKHRVQRLKRFQIGKVFRRDQPSVSKGRLREFVQCDLDIAGAYMEMVADAEAICIMSECLDRVGHRYQIRISSRKILNALMEHSGIGRNNFATVCSTIDKMDRLPWADIAAELRTKGLVDGQVAVLKRYVCVSGGIEVIDTLRSGELYLYSDGKKGIDDLALLFKYLGIYGVGDRAVVDLSLARGLDYYTGVIFEAALVDFKDVGSVAGGGRYDNLVSSVLGKKSEWSVPCVGFSLGVTRILSVMLKVDRRRTTETEVFVGSSGGLLLEERMGVLSRLWRAGVAAETFYTRKYGYASLMEHVRKTDIPFFLLVGEKEIAENRFRLMYGEDRALQMYGDIDTIVNFIKSHRAGQRPPAGL.

The protein belongs to the class-II aminoacyl-tRNA synthetase family.

It is found in the cytoplasm. It catalyses the reaction tRNA(His) + L-histidine + ATP = L-histidyl-tRNA(His) + AMP + diphosphate + H(+). This is Probable histidine--tRNA ligase, cytoplasmic from Antonospora locustae (Microsporidian parasite).